Consider the following 397-residue polypeptide: uncharacterized protein (397 aa).

Helical transmembrane passes span 255 to 275 (LLTYGISLTIISIFLYMICYA), 284 to 304 (MITFQWILFTGGLSALGVLLA), 308 to 328 (LITALVAFLSAPITTLVPLPL), and 370 to 390 (VLLVATLSNLGASIGVFYCLG).

The protein localises to the cell membrane. This is an uncharacterized protein from Methanocaldococcus jannaschii (strain ATCC 43067 / DSM 2661 / JAL-1 / JCM 10045 / NBRC 100440) (Methanococcus jannaschii).